Reading from the N-terminus, the 199-residue chain is Superoxide dismutase [Cu-Zn] (199 aa).

Positions 1-22 (MKLTKVALFSLGLFGFSSMALA) are cleaved as a signal peptide. Positions 92, 94, and 117 each coordinate Cu cation. Residues cysteine 99 and cysteine 195 are joined by a disulfide bond. Zn(2+) is bound by residues histidine 117, histidine 126, histidine 135, and aspartate 138. Histidine 173 contacts Cu cation.

This sequence belongs to the Cu-Zn superoxide dismutase family. In terms of assembly, homodimer. Cu cation serves as cofactor. The cofactor is Zn(2+).

The protein resides in the periplasm. It catalyses the reaction 2 superoxide + 2 H(+) = H2O2 + O2. Its function is as follows. Destroys radicals which are normally produced within the cells and which are toxic to biological systems. May play a role in the interactive biology of organisms with their hosts and so contribute to their capacity to cause disease. The sequence is that of Superoxide dismutase [Cu-Zn] (sodC) from Haemophilus ducreyi (strain 35000HP / ATCC 700724).